Reading from the N-terminus, the 452-residue chain is Phosphoglucosamine mutase (452 aa).

Residue S104 is the Phosphoserine intermediate of the active site. Residues S104, D246, D248, and D250 each coordinate Mg(2+). At S104 the chain carries Phosphoserine.

The protein belongs to the phosphohexose mutase family. Requires Mg(2+) as cofactor. In terms of processing, activated by phosphorylation.

It carries out the reaction alpha-D-glucosamine 1-phosphate = D-glucosamine 6-phosphate. Catalyzes the conversion of glucosamine-6-phosphate to glucosamine-1-phosphate. The polypeptide is Phosphoglucosamine mutase (Streptomyces coelicolor (strain ATCC BAA-471 / A3(2) / M145)).